Consider the following 406-residue polypeptide: Digeranylgeranylglycerophospholipid reductase 2 (406 aa).

Gly-15, Glu-34, Cys-45, Ala-46, Gly-48, Arg-99, Ala-123, Asp-279, Gly-291, and Ile-292 together coordinate FAD.

The protein belongs to the geranylgeranyl reductase family. DGGGPL reductase subfamily. It depends on FAD as a cofactor.

It catalyses the reaction a 2,3-bis-O-phytanyl-sn-glycerol 1-phospholipid + 8 oxidized 2[4Fe-4S]-[ferredoxin] = a 2,3-bis-O-(geranylgeranyl)-sn-glycerol 1-phospholipid + 8 reduced 2[4Fe-4S]-[ferredoxin] + 16 H(+). The enzyme catalyses 2,3-bis-O-(phytanyl)-sn-glycerol 1-phosphate + 8 oxidized 2[4Fe-4S]-[ferredoxin] = 2,3-bis-O-(geranylgeranyl)-sn-glycerol 1-phosphate + 8 reduced 2[4Fe-4S]-[ferredoxin] + 16 H(+). The catalysed reaction is a 2,3-bis-O-phytanyl-sn-glycerol 1-phospholipid + 8 A = a 2,3-bis-O-(geranylgeranyl)-sn-glycerol 1-phospholipid + 8 AH2. It carries out the reaction CDP-2,3-bis-O-(geranylgeranyl)-sn-glycerol + 8 AH2 = CDP-2,3-bis-O-(phytanyl)-sn-glycerol + 8 A. It catalyses the reaction archaetidylserine + 8 AH2 = 2,3-bis-O-phytanyl-sn-glycero-3-phospho-L-serine + 8 A. It functions in the pathway membrane lipid metabolism; glycerophospholipid metabolism. Its function is as follows. Is involved in the reduction of 2,3-digeranylgeranylglycerophospholipids (unsaturated archaeols) into 2,3-diphytanylglycerophospholipids (saturated archaeols) in the biosynthesis of archaeal membrane lipids. Catalyzes the formation of archaetidic acid (2,3-di-O-phytanyl-sn-glyceryl phosphate) from 2,3-di-O-geranylgeranylglyceryl phosphate (DGGGP) via the hydrogenation of each double bond of the isoprenoid chains. Is also probably able to reduce double bonds of geranyl groups in CDP-2,3-bis-O-(geranylgeranyl)-sn-glycerol and archaetidylserine, thus acting at various stages in the biosynthesis of archaeal membrane lipids. This chain is Digeranylgeranylglycerophospholipid reductase 2, found in Methanococcoides burtonii (strain DSM 6242 / NBRC 107633 / OCM 468 / ACE-M).